The primary structure comprises 663 residues: UvrABC system protein B (663 aa).

Basic and acidic residues predominate over residues 1–10 (MIDKRDDKPF). Positions 1–23 (MIDKRDDKPFKLKSKYKPSGDQP) are disordered. In terms of domain architecture, Helicase ATP-binding spans 31–271 (DNIEGGEKAQ…EQSIAKIQAE (241 aa)). Position 44 to 51 (44 to 51 (GATGTGKT)) interacts with ATP. Positions 97–120 (YYDYYQPEAYVPSSDTYIEKDSSV) match the Beta-hairpin motif. A Helicase C-terminal domain is found at 435-601 (QMDDLLGEIN…TIKKDIRGLI (167 aa)). The UVR domain maps to 627–662 (KEAINALQKQMQEAAELLDFELAAQMRDLILELKLM).

Belongs to the UvrB family. As to quaternary structure, forms a heterotetramer with UvrA during the search for lesions. Interacts with UvrC in an incision complex.

It is found in the cytoplasm. Functionally, the UvrABC repair system catalyzes the recognition and processing of DNA lesions. A damage recognition complex composed of 2 UvrA and 2 UvrB subunits scans DNA for abnormalities. Upon binding of the UvrA(2)B(2) complex to a putative damaged site, the DNA wraps around one UvrB monomer. DNA wrap is dependent on ATP binding by UvrB and probably causes local melting of the DNA helix, facilitating insertion of UvrB beta-hairpin between the DNA strands. Then UvrB probes one DNA strand for the presence of a lesion. If a lesion is found the UvrA subunits dissociate and the UvrB-DNA preincision complex is formed. This complex is subsequently bound by UvrC and the second UvrB is released. If no lesion is found, the DNA wraps around the other UvrB subunit that will check the other stand for damage. The sequence is that of UvrABC system protein B from Streptococcus pyogenes serotype M2 (strain MGAS10270).